The sequence spans 88 residues: MANSKSAKKRALQSEKRRQHNASRSSMLRTYVKKVIAAINAGDHATATAAFAVAQPIVDRMATKGLIHKNKAARYKSRLNAKIKALVA.

A compositionally biased stretch (basic residues) spans 1 to 21 (MANSKSAKKRALQSEKRRQHN). Residues 1-26 (MANSKSAKKRALQSEKRRQHNASRSS) are disordered.

It belongs to the bacterial ribosomal protein bS20 family.

Binds directly to 16S ribosomal RNA. This is Small ribosomal subunit protein bS20 from Shewanella halifaxensis (strain HAW-EB4).